The sequence spans 210 residues: Thymidylate kinase (210 aa).

10-17 (GIDGCGKT) lines the ATP pocket.

It belongs to the thymidylate kinase family.

It carries out the reaction dTMP + ATP = dTDP + ADP. In terms of biological role, phosphorylation of dTMP to form dTDP in both de novo and salvage pathways of dTTP synthesis. The chain is Thymidylate kinase from Prochlorococcus marinus (strain MIT 9515).